The chain runs to 308 residues: Methionyl-tRNA formyltransferase (308 aa).

109-112 (SLLP) serves as a coordination point for (6S)-5,6,7,8-tetrahydrofolate.

It belongs to the Fmt family.

It catalyses the reaction L-methionyl-tRNA(fMet) + (6R)-10-formyltetrahydrofolate = N-formyl-L-methionyl-tRNA(fMet) + (6S)-5,6,7,8-tetrahydrofolate + H(+). Functionally, attaches a formyl group to the free amino group of methionyl-tRNA(fMet). The formyl group appears to play a dual role in the initiator identity of N-formylmethionyl-tRNA by promoting its recognition by IF2 and preventing the misappropriation of this tRNA by the elongation apparatus. The chain is Methionyl-tRNA formyltransferase from Salinispora tropica (strain ATCC BAA-916 / DSM 44818 / JCM 13857 / NBRC 105044 / CNB-440).